We begin with the raw amino-acid sequence, 278 residues long: D-arabinitol 2-dehydrogenase [ribulose-forming] (278 aa).

2 residues coordinate NADP(+): Leu-28 and Asn-49. Catalysis depends on Ser-166, which acts as the Proton donor. NADP(+) is bound by residues Tyr-181, Lys-185, Ile-214, and Thr-216. Tyr-181 (proton acceptor) is an active-site residue. Lys-185 functions as the Lowers pKa of active site Tyr in the catalytic mechanism.

The protein belongs to the short-chain dehydrogenases/reductases (SDR) family.

It carries out the reaction D-arabinitol + NAD(+) = D-ribulose + NADH + H(+). It participates in carbohydrate metabolism; D-arabinitol metabolism. This chain is D-arabinitol 2-dehydrogenase [ribulose-forming] (ARDH), found in Scheffersomyces stipitis (strain ATCC 58785 / CBS 6054 / NBRC 10063 / NRRL Y-11545) (Yeast).